The sequence spans 702 residues: Elongation factor G (702 aa).

Residues 8–290 (HRVRNIGIAA…AVAMYLPAPT (283 aa)) enclose the tr-type G domain. GTP is bound by residues 17–24 (AHIDAGKT), 87–91 (DTPGH), and 141–144 (NKMD).

Belongs to the TRAFAC class translation factor GTPase superfamily. Classic translation factor GTPase family. EF-G/EF-2 subfamily.

The protein localises to the cytoplasm. In terms of biological role, catalyzes the GTP-dependent ribosomal translocation step during translation elongation. During this step, the ribosome changes from the pre-translocational (PRE) to the post-translocational (POST) state as the newly formed A-site-bound peptidyl-tRNA and P-site-bound deacylated tRNA move to the P and E sites, respectively. Catalyzes the coordinated movement of the two tRNA molecules, the mRNA and conformational changes in the ribosome. This chain is Elongation factor G, found in Aliarcobacter butzleri (strain RM4018) (Arcobacter butzleri).